The primary structure comprises 176 residues: NAD(P)H-quinone oxidoreductase subunit 6, chloroplastic (176 aa).

5 helical membrane passes run Phe10–Thr30, Pro32–Leu52, Ala61–Met81, Val95–Ile115, and Phe152–Ser172.

This sequence belongs to the complex I subunit 6 family. In terms of assembly, NDH is composed of at least 16 different subunits, 5 of which are encoded in the nucleus.

The protein localises to the plastid. The protein resides in the chloroplast thylakoid membrane. It catalyses the reaction a plastoquinone + NADH + (n+1) H(+)(in) = a plastoquinol + NAD(+) + n H(+)(out). It carries out the reaction a plastoquinone + NADPH + (n+1) H(+)(in) = a plastoquinol + NADP(+) + n H(+)(out). In terms of biological role, NDH shuttles electrons from NAD(P)H:plastoquinone, via FMN and iron-sulfur (Fe-S) centers, to quinones in the photosynthetic chain and possibly in a chloroplast respiratory chain. The immediate electron acceptor for the enzyme in this species is believed to be plastoquinone. Couples the redox reaction to proton translocation, and thus conserves the redox energy in a proton gradient. This Aethionema grandiflorum (Persian stone-cress) protein is NAD(P)H-quinone oxidoreductase subunit 6, chloroplastic (ndhG).